Reading from the N-terminus, the 155-residue chain is Endoribonuclease YbeY (155 aa).

H120, H124, and H130 together coordinate Zn(2+).

It belongs to the endoribonuclease YbeY family. Zn(2+) serves as cofactor.

Its subcellular location is the cytoplasm. Single strand-specific metallo-endoribonuclease involved in late-stage 70S ribosome quality control and in maturation of the 3' terminus of the 16S rRNA. The sequence is that of Endoribonuclease YbeY from Staphylococcus aureus (strain MSSA476).